The chain runs to 1188 residues: uncharacterized protein (1188 aa).

Disordered regions lie at residues 126–468, 484–771, 790–823, and 847–1039; these read GDLR…SQME, EDRF…LYKP, ARGG…TDEL, and QRAQ…FSRF. 3 stretches are compositionally biased toward pro residues: residues 139-151, 159-193, and 208-240; these read IPPP…PGPP, GGSP…PPPV, and IPTP…PAPA. S260 carries the post-translational modification Phosphoserine. Residues 322–331 show a composition bias toward basic and acidic residues; sequence EAPRKEEGAT. A compositionally biased stretch (pro residues) spans 389–418; the sequence is TPPPAPPLPPPAPPLPPPAPPLPPAAPPLP. Positions 432-441 are enriched in low complexity; the sequence is KTPKSSSPAL. 2 stretches are compositionally biased toward basic and acidic residues: residues 501–514 and 566–583; these read KEGK…EKET and IRNE…KEAK. A compositionally biased stretch (low complexity) spans 618–633; sequence LPPQSTTLLPTTSLQP. Residues 640–652 are compositionally biased toward pro residues; it reads AIPPKATPEPAIP. Residue T666 is modified to Phosphothreonine. Positions 689–703 are enriched in low complexity; the sequence is PAIASTATTLPTTTS. A compositionally biased stretch (polar residues) spans 875 to 893; that stretch reads AEASSDSIFHSQGTPNSFT. The segment covering 920–931 has biased composition (basic and acidic residues); that stretch reads LGRDAEGTELSR. Residues 986-1001 show a composition bias toward pro residues; it reads IPPPPEFSNDPEPPAP. Positions 1007-1019 are enriched in polar residues; that stretch reads GRQSSPPRNNYSD. Low complexity predominate over residues 1026–1035; the sequence is AGPGAPPALG. Position 1044 is an asymmetric dimethylarginine (R1044). A disordered region spans residues 1069–1160; sequence GEPHRGPGLP…SPYTTTRYGS (92 aa). Omega-N-methylarginine is present on residues R1073 and R1084. Residue R1157 is modified to Asymmetric dimethylarginine.

This is an uncharacterized protein from Homo sapiens (Human).